The following is a 417-amino-acid chain: Probable medium-chain specific acyl-CoA dehydrogenase 10, mitochondrial (417 aa).

Residues 1-15 (MLSRIATSSLGLSRS) constitute a mitochondrion transit peptide. Residues 148-157 (YCVTEPGAGS) and 181-183 (WIT) each bind FAD. Residue serine 157 coordinates substrate. 268–271 (DMTR) serves as a coordination point for substrate. FAD contacts are provided by residues 306–307 (HQ) and 364–368 (QIFGG). The active-site Proton acceptor is the glutamate 391. Residue glycine 392 coordinates substrate. 393 to 395 (TSQ) contributes to the FAD binding site.

This sequence belongs to the acyl-CoA dehydrogenase family. In terms of assembly, homotetramer. FAD is required as a cofactor. In terms of tissue distribution, expressed in the epidermis and intestine.

It localises to the mitochondrion matrix. The catalysed reaction is a medium-chain 2,3-saturated fatty acyl-CoA + oxidized [electron-transfer flavoprotein] + H(+) = a medium-chain (2E)-enoyl-CoA + reduced [electron-transfer flavoprotein]. Its pathway is lipid metabolism; mitochondrial fatty acid beta-oxidation. Functionally, this enzyme is specific for acyl chain lengths of 4 to 16. In Caenorhabditis elegans, this protein is Probable medium-chain specific acyl-CoA dehydrogenase 10, mitochondrial (acdh-10).